Here is an 81-residue protein sequence, read N- to C-terminus: N.vectensis toxin 4 (81 aa).

An N-terminal signal peptide occupies residues 1–20; that stretch reads MRSSWMFVICFAMLILYTNG. 3 disulfide bridges follow: Cys-46-Cys-75, Cys-48-Cys-70, and Cys-63-Cys-76.

As to expression, expressed in ectodermal gland cells. In adult female tissues, highly transcribed in mesenteries (gametes-producing tissue) and slightly transcribed in tentacles, pharynx and physa.

In terms of biological role, has toxic effects on zebrafish larvae. It causes contractile paralysis and twitching of the tail within 30 minutes, followed by death within 40 minutes. Does not show any toxicity when injected into arthropods (cherry shrimps or grass shrimps). This Nematostella vectensis (Starlet sea anemone) protein is N.vectensis toxin 4.